A 273-amino-acid chain; its full sequence is Pantothenate synthetase (273 aa).

27–34 (MGALHNGH) serves as a coordination point for ATP. His34 functions as the Proton donor in the catalytic mechanism. Residue Gln58 participates in (R)-pantoate binding. Residue Gln58 coordinates beta-alanine. 144–147 (GKKD) is an ATP binding site. A (R)-pantoate-binding site is contributed by Gln150. ATP is bound by residues Val173 and 181–184 (LSSR).

Belongs to the pantothenate synthetase family. In terms of assembly, homodimer.

It is found in the cytoplasm. It carries out the reaction (R)-pantoate + beta-alanine + ATP = (R)-pantothenate + AMP + diphosphate + H(+). It functions in the pathway cofactor biosynthesis; (R)-pantothenate biosynthesis; (R)-pantothenate from (R)-pantoate and beta-alanine: step 1/1. Functionally, catalyzes the condensation of pantoate with beta-alanine in an ATP-dependent reaction via a pantoyl-adenylate intermediate. This is Pantothenate synthetase from Campylobacter fetus subsp. fetus (strain 82-40).